The following is a 176-amino-acid chain: Immunity factor for TNT homolog (176 aa).

Interacts with the tuberculosis necrotizing toxin (TNT) homolog, the C-terminal domain of the outer membrane channel protein CpnT.

Functionally, antitoxin for tuberculosis necrotizing toxin (TNT) homolog. Acts by binding directly to TNT, which inhibits NAD(+) glycohydrolase activity of TNT and protects M.bovis from self-poisoning. This is Immunity factor for TNT homolog from Mycobacterium bovis (strain BCG / Pasteur 1173P2).